The chain runs to 308 residues: MANTVILVDQPTLEKMKQTYLPFSNPKLPPGAVFAAKKPGVSITGYKSRKVMFQGVNGEVEAKKWVATLPESKTKAPSVSKGILPANFASKNVIGSDEVGTGDFFGPITVCAAYVDAEMMPLLKELGVKDSKAMKDPEICRIAEKIMPLVPHSVLLCPNPKYNELQKRGMNQGQMKALLHNRAIENVLKKLAPVKPEAILIDQFAEKNTYYRYLAKEPSIIREDVFFATKAEGLHLSVAAASIIARYKFVQAFDAMSKEVGIPLPKGAGPHVDAVAAEIIERFGLETLTKYTKQHFANTEKALKMVKK.

Residues 91 to 308 (KNVIGSDEVG…TEKALKMVKK (218 aa)) form the RNase H type-2 domain. Positions 97, 98, and 202 each coordinate a divalent metal cation.

The protein belongs to the RNase HII family. RnhC subfamily. Mn(2+) is required as a cofactor. The cofactor is Mg(2+).

Its subcellular location is the cytoplasm. The enzyme catalyses Endonucleolytic cleavage to 5'-phosphomonoester.. Functionally, endonuclease that specifically degrades the RNA of RNA-DNA hybrids. The sequence is that of Ribonuclease HIII from Listeria monocytogenes serotype 4b (strain F2365).